We begin with the raw amino-acid sequence, 291 residues long: Probable S-adenosylmethionine-dependent methyltransferase CRG1 (291 aa).

The protein belongs to the methyltransferase superfamily.

It is found in the cytoplasm. Its function is as follows. Probable S-adenosylmethionine-dependent methyltransferase which mediates cantharidin resistance. The chain is Probable S-adenosylmethionine-dependent methyltransferase CRG1 (CRG1) from Saccharomyces cerevisiae (strain ATCC 204508 / S288c) (Baker's yeast).